Consider the following 178-residue polypeptide: ATP-dependent protease subunit HslV (178 aa).

The active site involves Thr7. Positions 162, 165, and 168 each coordinate Na(+).

The protein belongs to the peptidase T1B family. HslV subfamily. In terms of assembly, a double ring-shaped homohexamer of HslV is capped on each side by a ring-shaped HslU homohexamer. The assembly of the HslU/HslV complex is dependent on binding of ATP.

It localises to the cytoplasm. The enzyme catalyses ATP-dependent cleavage of peptide bonds with broad specificity.. With respect to regulation, allosterically activated by HslU binding. Functionally, protease subunit of a proteasome-like degradation complex believed to be a general protein degrading machinery. The protein is ATP-dependent protease subunit HslV of Cupriavidus metallidurans (strain ATCC 43123 / DSM 2839 / NBRC 102507 / CH34) (Ralstonia metallidurans).